The following is a 115-amino-acid chain: U3-lycotoxin-Ls1p (115 aa).

The signal sequence occupies residues 1–20 (MKFVLLFGVLLVTLFSYSSA). A propeptide spanning residues 21 to 44 (EMFDDFDQADEDELLSLIEKEEAR) is cleaved from the precursor. Cystine bridges form between C48-C63, C55-C72, C62-C87, and C74-C85.

The protein belongs to the neurotoxin 19 (CSTX) family. 01 subfamily. As to expression, expressed by the venom gland.

The protein localises to the secreted. In Lycosa singoriensis (Wolf spider), this protein is U3-lycotoxin-Ls1p.